We begin with the raw amino-acid sequence, 239 residues long: Large ribosomal subunit protein uL3 (239 aa).

Disordered regions lie at residues 140-166 (SHRS…PGHM) and 211-239 (PLPK…QEGA). The residue at position 151 (Gln-151) is an N5-methylglutamine.

It belongs to the universal ribosomal protein uL3 family. As to quaternary structure, part of the 50S ribosomal subunit. Forms a cluster with proteins L14 and L19. In terms of processing, methylated by PrmB.

Its function is as follows. One of the primary rRNA binding proteins, it binds directly near the 3'-end of the 23S rRNA, where it nucleates assembly of the 50S subunit. The polypeptide is Large ribosomal subunit protein uL3 (Bradyrhizobium sp. (strain BTAi1 / ATCC BAA-1182)).